Here is a 476-residue protein sequence, read N- to C-terminus: Probable protein S-acyltransferase 5 (476 aa).

A compositionally biased stretch (basic and acidic residues) spans 1 to 11; it reads MLDLQPSDRRH. The segment at 1–21 is disordered; that stretch reads MLDLQPSDRRHGAPSSSGGVS. 2 helical membrane-spanning segments follow: residues 53 to 73 and 85 to 105; these read SILITVFLITAPVIVFCIFVG and GVSVLAVAVGLILLDLVFLLL. A disordered region spans residues 119-138; the sequence is YPPEPESNEGNGEPRLAHTP. The 51-residue stretch at 158–208 folds into the DHHC domain; it reads KYCDTCMLYRPPRASHCSICNNCVEKFDHHCPWLGQCIGLRNYRFYFMFVL. The active-site S-palmitoyl cysteine intermediate is cysteine 188. Helical transmembrane passes span 209–223 and 246–266; these read CSTLLCIYVHVFCWI and SIALIIYTFICVWFVGGLTCF. Disordered regions lie at residues 320–340 and 373–454; these read SKEPAIPPRTVNGGMSSPSLQ and VASR…ASRD. Serine 336 is subject to Phosphoserine. A compositionally biased stretch (basic and acidic residues) spans 387-412; that stretch reads SEGRGIMHSRESSRGRGIMHSRESSR. The residue at position 418 (serine 418) is a Phosphoserine. A compositionally biased stretch (basic and acidic residues) spans 425–441; it reads VNEDLRTRDESVSRVGE.

The protein belongs to the DHHC palmitoyltransferase family.

The protein resides in the cell membrane. It carries out the reaction L-cysteinyl-[protein] + hexadecanoyl-CoA = S-hexadecanoyl-L-cysteinyl-[protein] + CoA. Functionally, palmitoyl acyltransferase. This Arabidopsis thaliana (Mouse-ear cress) protein is Probable protein S-acyltransferase 5 (PAT05).